The sequence spans 530 residues: Bifunctional purine biosynthesis protein PurH (530 aa).

The region spanning 1–148 (MENSRPIKRA…KNHKDVGIVV (148 aa)) is the MGS-like domain.

The protein belongs to the PurH family.

It carries out the reaction (6R)-10-formyltetrahydrofolate + 5-amino-1-(5-phospho-beta-D-ribosyl)imidazole-4-carboxamide = 5-formamido-1-(5-phospho-D-ribosyl)imidazole-4-carboxamide + (6S)-5,6,7,8-tetrahydrofolate. It catalyses the reaction IMP + H2O = 5-formamido-1-(5-phospho-D-ribosyl)imidazole-4-carboxamide. It participates in purine metabolism; IMP biosynthesis via de novo pathway; 5-formamido-1-(5-phospho-D-ribosyl)imidazole-4-carboxamide from 5-amino-1-(5-phospho-D-ribosyl)imidazole-4-carboxamide (10-formyl THF route): step 1/1. Its pathway is purine metabolism; IMP biosynthesis via de novo pathway; IMP from 5-formamido-1-(5-phospho-D-ribosyl)imidazole-4-carboxamide: step 1/1. The sequence is that of Bifunctional purine biosynthesis protein PurH from Psychromonas ingrahamii (strain DSM 17664 / CCUG 51855 / 37).